Reading from the N-terminus, the 471-residue chain is Pneumolysin (471 aa).

4 beta stranded membrane passes run 158-171, 178-187, 256-265, and 273-285; these read MEQL…DFEK, IDFNSVHSGE, SDEVEAAFEA, and APQT…LDNT. Positions 427–437 match the Conserved undecapeptide motif; it reads ECTGLAWEWWR. A Cholesterol binding motif is present at residues 459 to 460; that stretch reads TL.

This sequence belongs to the cholesterol-dependent cytolysin family. Homooligomeric pore complex of 35 to 50 subunits; when inserted in the host membrane. Has a slightly altered apparent molecular weight in a secA2 deletion mutant, but no post-translational modifications have been found.

It is found in the secreted. The protein localises to the cell wall. The protein resides in the host cell membrane. Functionally, a cholesterol-dependent toxin that causes cytolysis by forming pores in cholesterol containing host membranes. After binding to target membranes, the protein undergoes a major conformation change, leading to its insertion in the host membrane and formation of an oligomeric pore complex. Cholesterol is required for binding to host membranes, membrane insertion and pore formation; cholesterol binding is mediated by a Thr-Leu pair in the C-terminus. Can be reversibly inactivated by oxidation. This Streptococcus pneumoniae serotype 4 (strain ATCC BAA-334 / TIGR4) protein is Pneumolysin (ply).